Consider the following 190-residue polypeptide: Potassium-transporting ATPase KdpC subunit (190 aa).

A helical membrane pass occupies residues Thr10–Gly30.

This sequence belongs to the KdpC family. The system is composed of three essential subunits: KdpA, KdpB and KdpC.

It localises to the cell inner membrane. Its function is as follows. Part of the high-affinity ATP-driven potassium transport (or Kdp) system, which catalyzes the hydrolysis of ATP coupled with the electrogenic transport of potassium into the cytoplasm. This subunit acts as a catalytic chaperone that increases the ATP-binding affinity of the ATP-hydrolyzing subunit KdpB by the formation of a transient KdpB/KdpC/ATP ternary complex. The chain is Potassium-transporting ATPase KdpC subunit from Escherichia coli O81 (strain ED1a).